The chain runs to 73 residues: Putative membrane protein insertion efficiency factor (73 aa).

The protein belongs to the UPF0161 family.

It localises to the cell inner membrane. Its function is as follows. Could be involved in insertion of integral membrane proteins into the membrane. In Neisseria meningitidis serogroup C (strain 053442), this protein is Putative membrane protein insertion efficiency factor.